The sequence spans 286 residues: Bifunctional protein FolD (286 aa).

NADP(+)-binding positions include Gly166–Ser168 and Ile232.

This sequence belongs to the tetrahydrofolate dehydrogenase/cyclohydrolase family. In terms of assembly, homodimer.

The enzyme catalyses (6R)-5,10-methylene-5,6,7,8-tetrahydrofolate + NADP(+) = (6R)-5,10-methenyltetrahydrofolate + NADPH. The catalysed reaction is (6R)-5,10-methenyltetrahydrofolate + H2O = (6R)-10-formyltetrahydrofolate + H(+). Its pathway is one-carbon metabolism; tetrahydrofolate interconversion. In terms of biological role, catalyzes the oxidation of 5,10-methylenetetrahydrofolate to 5,10-methenyltetrahydrofolate and then the hydrolysis of 5,10-methenyltetrahydrofolate to 10-formyltetrahydrofolate. This is Bifunctional protein FolD from Vibrio cholerae serotype O1 (strain ATCC 39541 / Classical Ogawa 395 / O395).